The following is a 413-amino-acid chain: Cardiolipin synthase B (413 aa).

PLD phosphodiesterase domains are found at residues 108 to 135 (IFRR…SAEH) and 285 to 312 (RRRP…DPLS). Catalysis depends on residues histidine 113, lysine 115, aspartate 120, histidine 290, lysine 292, and aspartate 297. The segment at 388–413 (AQVPPPAQPEMETQDRVDPENSGVKP) is disordered.

Belongs to the phospholipase D family. Cardiolipin synthase subfamily. ClsB sub-subfamily.

The protein localises to the cell membrane. It carries out the reaction 2 a 1,2-diacyl-sn-glycero-3-phospho-(1'-sn-glycerol) = a cardiolipin + glycerol. In terms of biological role, catalyzes the phosphatidyl group transfer from one phosphatidylglycerol molecule to another to form cardiolipin (CL) (diphosphatidylglycerol) and glycerol. The sequence is that of Cardiolipin synthase B from Salmonella typhi.